The primary structure comprises 257 residues: L-aspartate dehydrogenase (257 aa).

Alanine 124 and asparagine 180 together coordinate NAD(+). Histidine 208 is an active-site residue.

It belongs to the L-aspartate dehydrogenase family.

The catalysed reaction is L-aspartate + NADP(+) + H2O = oxaloacetate + NH4(+) + NADPH + H(+). The enzyme catalyses L-aspartate + NAD(+) + H2O = oxaloacetate + NH4(+) + NADH + H(+). It participates in cofactor biosynthesis; NAD(+) biosynthesis; iminoaspartate from L-aspartate (dehydrogenase route): step 1/1. In terms of biological role, specifically catalyzes the NAD or NADP-dependent dehydrogenation of L-aspartate to iminoaspartate. The chain is L-aspartate dehydrogenase from Methanothermobacter thermautotrophicus (strain ATCC 29096 / DSM 1053 / JCM 10044 / NBRC 100330 / Delta H) (Methanobacterium thermoautotrophicum).